Reading from the N-terminus, the 305-residue chain is Protoheme IX farnesyltransferase (305 aa).

9 helical membrane passes run 31 to 51 (VMSLVMFTGFVGMWLAPYSVH), 52 to 72 (PFIAVIVLACISLGAGSAGAI), 102 to 119 (ALSFGLITGFFAVFFMAL), 123 to 145 (LLASFLLLFTIFYYICIYTIWLK), 151 to 171 (NIVIGGVSGALPPVIGYAAVS), 179 to 199 (IILFLIIFIWTPPHSWALALF), 218 to 238 (ILYTKEQILIYSILLFLVSLM), 240 to 260 (FFIGMNNFIYLIIAGMLGLVF), and 281 to 301 (FAYSIFYLFFIFLLLSSTSTI).

This sequence belongs to the UbiA prenyltransferase family. Protoheme IX farnesyltransferase subfamily.

The protein localises to the cell inner membrane. The catalysed reaction is heme b + (2E,6E)-farnesyl diphosphate + H2O = Fe(II)-heme o + diphosphate. It functions in the pathway porphyrin-containing compound metabolism; heme O biosynthesis; heme O from protoheme: step 1/1. Functionally, converts heme B (protoheme IX) to heme O by substitution of the vinyl group on carbon 2 of heme B porphyrin ring with a hydroxyethyl farnesyl side group. The polypeptide is Protoheme IX farnesyltransferase (Rickettsia akari (strain Hartford)).